Here is a 636-residue protein sequence, read N- to C-terminus: uncharacterized protein (636 aa).

The next 3 membrane-spanning stretches (helical) occupy residues 12-32 (AVIYAALILILLFVYGIFGSI), 34-54 (IMHLGVIDAIYYTITTVTTTG), and 75-95 (IGAGFLLYIFTLMLSVMFMSF). An RCK N-terminal domain is found at 112–231 (KNHFILCGFG…KKAGANRIIS (120 aa)).

The protein localises to the cell membrane. This is an uncharacterized protein from Methanothermus fervidus (strain ATCC 43054 / DSM 2088 / JCM 10308 / V24 S).